The chain runs to 459 residues: 3-carboxy-cis,cis-muconate cycloisomerase (459 aa).

Belongs to the class-II fumarase/aspartase family. As to quaternary structure, homotetramer.

The protein resides in the cytoplasm. The catalysed reaction is 2-(carboxymethyl)-5-oxo-2,5-dihydro-2-furoate = 3-carboxy-cis,cis-muconate + H(+). Its pathway is aromatic compound metabolism; beta-ketoadipate pathway; 5-oxo-4,5-dihydro-2-furylacetate from 3-carboxy-cis,cis-muconate: step 1/2. Catalyzes an anti cycloisomerization. In Pseudomonas aeruginosa (strain ATCC 15692 / DSM 22644 / CIP 104116 / JCM 14847 / LMG 12228 / 1C / PRS 101 / PAO1), this protein is 3-carboxy-cis,cis-muconate cycloisomerase (pcaB).